The chain runs to 180 residues: MKSRLETRYTEQIAPELFKELGYKSVMQVPKLTKIVINMGVGEATTDPKKLDAAVVELEQLTGQKPLVTKAKKSLAVFKLREGMPIGTKVTLRGKKMYDFLDRLTNVALPRVRDFRGVPKTSFDGFGNYTMGIKEQIIFPEIDYDKVQKLRGMDITIVTTAKTNEEAYKLLEKFGMPFAK.

The protein belongs to the universal ribosomal protein uL5 family. Part of the 50S ribosomal subunit; part of the 5S rRNA/L5/L18/L25 subcomplex. Contacts the 5S rRNA and the P site tRNA. Forms a bridge to the 30S subunit in the 70S ribosome.

This is one of the proteins that bind and probably mediate the attachment of the 5S RNA into the large ribosomal subunit, where it forms part of the central protuberance. In the 70S ribosome it contacts protein S13 of the 30S subunit (bridge B1b), connecting the 2 subunits; this bridge is implicated in subunit movement. Contacts the P site tRNA; the 5S rRNA and some of its associated proteins might help stabilize positioning of ribosome-bound tRNAs. The chain is Large ribosomal subunit protein uL5 from Mesoplasma florum (strain ATCC 33453 / NBRC 100688 / NCTC 11704 / L1) (Acholeplasma florum).